Consider the following 788-residue polypeptide: Xylulose-5-phosphate phosphoketolase (788 aa).

Belongs to the XFP family. As to quaternary structure, homohexamer. Requires thiamine diphosphate as cofactor.

It catalyses the reaction D-xylulose 5-phosphate + phosphate = acetyl phosphate + D-glyceraldehyde 3-phosphate + H2O. This chain is Xylulose-5-phosphate phosphoketolase (xpkA), found in Lactiplantibacillus pentosus (Lactobacillus pentosus).